The following is a 617-amino-acid chain: Putative metal ion transporter C17A12.14 (617 aa).

A disordered region spans residues 1-141 (MPSNTSRSVP…GKNTRDQPSP (141 aa)). A Phosphoserine modification is found at S105. A compositionally biased stretch (basic and acidic residues) spans 117 to 136 (SHPEDIQRKEFETENGKNTR). S152, S162, S226, and S241 each carry phosphoserine. Transmembrane regions (helical) follow at residues 560–580 (TILG…GMNV) and 590–610 (LGWF…SFIL).

This sequence belongs to the CorA metal ion transporter (MIT) (TC 1.A.35) family. In terms of assembly, interacts with sad1.

The protein localises to the membrane. This chain is Putative metal ion transporter C17A12.14, found in Schizosaccharomyces pombe (strain 972 / ATCC 24843) (Fission yeast).